We begin with the raw amino-acid sequence, 424 residues long: Gamma-glutamyl phosphate reductase (424 aa).

Positions 1 to 27 (MSVEAQSRSGAVDTQEPADLREQVHSA) are disordered.

It belongs to the gamma-glutamyl phosphate reductase family.

The protein localises to the cytoplasm. It carries out the reaction L-glutamate 5-semialdehyde + phosphate + NADP(+) = L-glutamyl 5-phosphate + NADPH + H(+). It participates in amino-acid biosynthesis; L-proline biosynthesis; L-glutamate 5-semialdehyde from L-glutamate: step 2/2. In terms of biological role, catalyzes the NADPH-dependent reduction of L-glutamate 5-phosphate into L-glutamate 5-semialdehyde and phosphate. The product spontaneously undergoes cyclization to form 1-pyrroline-5-carboxylate. The polypeptide is Gamma-glutamyl phosphate reductase (Mycolicibacterium smegmatis (strain ATCC 700084 / mc(2)155) (Mycobacterium smegmatis)).